A 178-amino-acid polypeptide reads, in one-letter code: Dual-action ribosomal maturation protein DarP (178 aa).

This sequence belongs to the DarP family.

It is found in the cytoplasm. Its function is as follows. Member of a network of 50S ribosomal subunit biogenesis factors which assembles along the 30S-50S interface, preventing incorrect 23S rRNA structures from forming. Promotes peptidyl transferase center (PTC) maturation. The polypeptide is Dual-action ribosomal maturation protein DarP (Haemophilus influenzae (strain 86-028NP)).